Reading from the N-terminus, the 262-residue chain is Adenosylcobinamide-GDP ribazoletransferase (262 aa).

A run of 6 helical transmembrane segments spans residues 43 to 63, 66 to 86, 120 to 140, 146 to 166, 191 to 211, and 242 to 262; these read YFGL…WLTQ, LPAG…TGGF, GAIA…ELAL, AGSA…SIIF, LFIL…LAAL, and AAQQ…GSIL.

This sequence belongs to the CobS family. Requires Mg(2+) as cofactor.

It is found in the cell inner membrane. The enzyme catalyses alpha-ribazole + adenosylcob(III)inamide-GDP = adenosylcob(III)alamin + GMP + H(+). It catalyses the reaction alpha-ribazole 5'-phosphate + adenosylcob(III)inamide-GDP = adenosylcob(III)alamin 5'-phosphate + GMP + H(+). Its pathway is cofactor biosynthesis; adenosylcobalamin biosynthesis; adenosylcobalamin from cob(II)yrinate a,c-diamide: step 7/7. Its function is as follows. Joins adenosylcobinamide-GDP and alpha-ribazole to generate adenosylcobalamin (Ado-cobalamin). Also synthesizes adenosylcobalamin 5'-phosphate from adenosylcobinamide-GDP and alpha-ribazole 5'-phosphate. The sequence is that of Adenosylcobinamide-GDP ribazoletransferase from Shewanella putrefaciens (strain CN-32 / ATCC BAA-453).